Here is a 152-residue protein sequence, read N- to C-terminus: Putative pre-16S rRNA nuclease (152 aa).

It belongs to the YqgF nuclease family.

Its subcellular location is the cytoplasm. Could be a nuclease involved in processing of the 5'-end of pre-16S rRNA. This chain is Putative pre-16S rRNA nuclease, found in Bifidobacterium longum (strain DJO10A).